The chain runs to 111 residues: Large ribosomal subunit protein uL22 (111 aa).

This sequence belongs to the universal ribosomal protein uL22 family. Part of the 50S ribosomal subunit.

This protein binds specifically to 23S rRNA; its binding is stimulated by other ribosomal proteins, e.g. L4, L17, and L20. It is important during the early stages of 50S assembly. It makes multiple contacts with different domains of the 23S rRNA in the assembled 50S subunit and ribosome. Functionally, the globular domain of the protein is located near the polypeptide exit tunnel on the outside of the subunit, while an extended beta-hairpin is found that lines the wall of the exit tunnel in the center of the 70S ribosome. The protein is Large ribosomal subunit protein uL22 of Xanthomonas oryzae pv. oryzae (strain PXO99A).